The following is a 449-amino-acid chain: MLDPILLRKDLQTVVDRLQSRGVSFDTERFNDLESRRKLVQTETEALQARRNALAKQIGQLKAKGEDASAVMAESQALPGQLKQLEESLAMLQQQLNELLMSVPNLPHASVPVGASSDDNVEVRRWLPAEAGADGNPAPLGFAPRDHVAIGEPLGLDFDTAAKLSGARFSFMRGQMARLHRALAQFMLDLQTGEHGYTECYTPYIVNSSTLYGTGQLPKFKDDMFFVTKGGGDDDPKVDEQGKPLAREDQYLISTSEITLTSVVRDTIVPGDVLPLRMTAHTPCFRSEAGSGGRDTRGMIRQHQFDKVEMVQVANPEQSYDALEQMVGHAEEVLRRLGLPYRVMLLCTGDMGFGAAKTYDLEVWLPAQNTWREISSVSNCESFQARRMQARFRADAKSKPEFVHTLNGSGLAVGRALVAVLENYQQEDGSVRIPEALRPYMGGIEQLKA.

255-257 (TSE) lines the L-serine pocket. 286–288 (RSE) contributes to the ATP binding site. Glu309 contributes to the L-serine binding site. An ATP-binding site is contributed by 373 to 376 (EISS). Residue Ser409 coordinates L-serine.

Belongs to the class-II aminoacyl-tRNA synthetase family. Type-1 seryl-tRNA synthetase subfamily. As to quaternary structure, homodimer. The tRNA molecule binds across the dimer.

The protein resides in the cytoplasm. The enzyme catalyses tRNA(Ser) + L-serine + ATP = L-seryl-tRNA(Ser) + AMP + diphosphate + H(+). The catalysed reaction is tRNA(Sec) + L-serine + ATP = L-seryl-tRNA(Sec) + AMP + diphosphate + H(+). The protein operates within aminoacyl-tRNA biosynthesis; selenocysteinyl-tRNA(Sec) biosynthesis; L-seryl-tRNA(Sec) from L-serine and tRNA(Sec): step 1/1. Its function is as follows. Catalyzes the attachment of serine to tRNA(Ser). Is also able to aminoacylate tRNA(Sec) with serine, to form the misacylated tRNA L-seryl-tRNA(Sec), which will be further converted into selenocysteinyl-tRNA(Sec). This is Serine--tRNA ligase from Bordetella avium (strain 197N).